We begin with the raw amino-acid sequence, 152 residues long: Superoxide dismutase [Cu-Zn] (152 aa).

Residues His45, His47, and His62 each coordinate Cu cation. Cysteines 56 and 145 form a disulfide. His62, His70, His79, and Asp82 together coordinate Zn(2+). His119 contacts Cu cation.

It belongs to the Cu-Zn superoxide dismutase family. Homodimer. Cu cation is required as a cofactor. The cofactor is Zn(2+).

It localises to the cytoplasm. The catalysed reaction is 2 superoxide + 2 H(+) = H2O2 + O2. Functionally, destroys radicals which are normally produced within the cells and which are toxic to biological systems. In Carica papaya (Papaya), this protein is Superoxide dismutase [Cu-Zn] (SODCC).